Consider the following 1077-residue polypeptide: Error-prone DNA polymerase (1077 aa).

Belongs to the DNA polymerase type-C family. DnaE2 subfamily.

It localises to the cytoplasm. It carries out the reaction DNA(n) + a 2'-deoxyribonucleoside 5'-triphosphate = DNA(n+1) + diphosphate. DNA polymerase involved in damage-induced mutagenesis and translesion synthesis (TLS). It is not the major replicative DNA polymerase. This Brucella suis biovar 1 (strain 1330) protein is Error-prone DNA polymerase.